Consider the following 112-residue polypeptide: Putative transposase YkgN (112 aa).

It belongs to the transposase 8 family.

The protein is Putative transposase YkgN (ykgN) of Escherichia coli (strain K12).